Consider the following 103-residue polypeptide: Interleukin-8 (103 aa).

Positions 1 to 25 (MTSKLAVAFLAVFLLSAALCEAAVL) are cleaved as a signal peptide. Arginine 27 carries the citrulline modification. 2 disulfides stabilise this stretch: cysteine 34–cysteine 61 and cysteine 36–cysteine 77.

The protein belongs to the intercrine alpha (chemokine CxC) family. In terms of assembly, homodimer. Interacts with TNFAIP6 (via Link domain); this interaction interferes with chemokine binding to glycosaminoglycans. Citrullination at Arg-27 prevents proteolysis, and dampens tissue inflammation, it also enhances leukocytosis, possibly through impaired chemokine clearance from the blood circulation. As to expression, alveolar macrophages.

It localises to the secreted. In terms of biological role, chemotactic factor that mediates inflammatory response by attracting neutrophils, basophils, and T-cells to clear pathogens and protect the host from infection. Also plays an important role in neutrophil activation. Released in response to an inflammatory stimulus, exerts its effect by binding to the G-protein-coupled receptors CXCR1 and CXCR2, primarily found in neutrophils, monocytes and endothelial cells. G-protein heterotrimer (alpha, beta, gamma subunits) constitutively binds to CXCR1/CXCR2 receptor and activation by IL8 leads to beta and gamma subunits release from Galpha (GNAI2 in neutrophils) and activation of several downstream signaling pathways including PI3K and MAPK pathways. This Sus scrofa (Pig) protein is Interleukin-8 (CXCL8).